Reading from the N-terminus, the 159-residue chain is Cyclic pyranopterin monophosphate synthase (159 aa).

Residues 75 to 77 and 113 to 114 each bind substrate; these read LCH and ME. Residue Asp128 is part of the active site.

The protein belongs to the MoaC family. Homohexamer; trimer of dimers.

The enzyme catalyses (8S)-3',8-cyclo-7,8-dihydroguanosine 5'-triphosphate = cyclic pyranopterin phosphate + diphosphate. It participates in cofactor biosynthesis; molybdopterin biosynthesis. Its function is as follows. Catalyzes the conversion of (8S)-3',8-cyclo-7,8-dihydroguanosine 5'-triphosphate to cyclic pyranopterin monophosphate (cPMP). This chain is Cyclic pyranopterin monophosphate synthase, found in Cereibacter sphaeroides (strain ATCC 17029 / ATH 2.4.9) (Rhodobacter sphaeroides).